A 116-amino-acid chain; its full sequence is Ribosome-binding factor A (116 aa).

This sequence belongs to the RbfA family. Monomer. Binds 30S ribosomal subunits, but not 50S ribosomal subunits or 70S ribosomes.

It is found in the cytoplasm. In terms of biological role, one of several proteins that assist in the late maturation steps of the functional core of the 30S ribosomal subunit. Associates with free 30S ribosomal subunits (but not with 30S subunits that are part of 70S ribosomes or polysomes). Required for efficient processing of 16S rRNA. May interact with the 5'-terminal helix region of 16S rRNA. The polypeptide is Ribosome-binding factor A (Chlorobium phaeobacteroides (strain DSM 266 / SMG 266 / 2430)).